A 505-amino-acid chain; its full sequence is Putative F-box protein At1g58310 (505 aa).

The 49-residue stretch at arginine 7–serine 55 folds into the F-box domain.

The chain is Putative F-box protein At1g58310 from Arabidopsis thaliana (Mouse-ear cress).